The primary structure comprises 660 residues: Acetyl-coenzyme A synthetase (660 aa).

CoA contacts are provided by residues 197–200 (RGGK) and Thr-317. Residues 397 to 399 (GEP), 421 to 426 (DTFWQT), Asp-512, and Arg-528 each bind ATP. Ser-536 lines the CoA pocket. Arg-539 contacts ATP. Val-550 and Val-555 together coordinate Mg(2+). Lys-625 carries the N6-acetyllysine modification.

It belongs to the ATP-dependent AMP-binding enzyme family. Mg(2+) is required as a cofactor. Post-translationally, acetylated. Deacetylation by the SIR2-homolog deacetylase activates the enzyme.

It carries out the reaction acetate + ATP + CoA = acetyl-CoA + AMP + diphosphate. It functions in the pathway ketone degradation; acetoin degradation. Its function is as follows. Catalyzes the conversion of acetate into acetyl-CoA (AcCoA), an essential intermediate at the junction of anabolic and catabolic pathways. AcsA undergoes a two-step reaction. In the first half reaction, AcsA combines acetate with ATP to form acetyl-adenylate (AcAMP) intermediate. In the second half reaction, it can then transfer the acetyl group from AcAMP to the sulfhydryl group of CoA, forming the product AcCoA. Although acetate is the preferred substrate of AcsA, propionate is also used, but at a diminished rate compared with that of acetate. Fatty acids with more than three carbon atoms are usually not accepted as substrates by AcsA. The protein is Acetyl-coenzyme A synthetase of Cupriavidus necator (strain ATCC 17699 / DSM 428 / KCTC 22496 / NCIMB 10442 / H16 / Stanier 337) (Ralstonia eutropha).